Here is a 579-residue protein sequence, read N- to C-terminus: Type II restriction enzyme FokI (579 aa).

Catalysis depends on residues Asp450, Asp467, and Lys469.

As to quaternary structure, monomer, in which form it can cleave DNA. Homodimer when bound to DNA. Requires Mg(2+) as cofactor.

The enzyme catalyses Endonucleolytic cleavage of DNA to give specific double-stranded fragments with terminal 5'-phosphates.. Functionally, an S subtype restriction enzyme that recognizes the asymmetric double-stranded sequence 5'-GGATG-3' and cleaves respectively 14 bases after G-1 (top strand) and 13 bases before C-1 (bottom strand). This chain is Type II restriction enzyme FokI, found in Planomicrobium okeanokoites (Planococcus okeanokoites).